Here is a 123-residue protein sequence, read N- to C-terminus: Ribosome-binding factor A (123 aa).

Belongs to the RbfA family. Monomer. Binds 30S ribosomal subunits, but not 50S ribosomal subunits or 70S ribosomes.

It is found in the cytoplasm. Its function is as follows. One of several proteins that assist in the late maturation steps of the functional core of the 30S ribosomal subunit. Associates with free 30S ribosomal subunits (but not with 30S subunits that are part of 70S ribosomes or polysomes). Required for efficient processing of 16S rRNA. May interact with the 5'-terminal helix region of 16S rRNA. In Neisseria meningitidis serogroup C (strain 053442), this protein is Ribosome-binding factor A.